The chain runs to 395 residues: Type III polyketide synthase A (395 aa).

Lysine 63–threonine 70 serves as a coordination point for CoA. The Nucleophile role is filled by cysteine 172. Glycine 224–aspartate 225 contacts substrate. Residues leucine 274, glycine 314–alanine 317, and alanine 317 each bind CoA.

It belongs to the thiolase-like superfamily. Chalcone/stilbene synthases family. As to quaternary structure, homodimer. Interacts with 4CLL1/ACOS5 and TKPR1. In terms of tissue distribution, expressed in flowers and flower buds (at protein level), and, at very low levels, in roots, seedlings, leaves and stems. Mostly confined to anther tapetal cells.

It localises to the endoplasmic reticulum. Its pathway is secondary metabolite biosynthesis; flavonoid biosynthesis. In terms of biological role, plant type III polyketide synthases (PKSs) that catalyzes the condensation of malonyl-CoA units with various CoA ester starter molecules to generate a diverse array of natural products including long-chain alkyl alpha-pyrones. Accepts up to C(20) chain-length fatty acyl CoAs as starter substrates, and carries out sequential condensations with malonyl-CoA to produce triketide and tetraketide alpha-pyrones, potential sporopollenin precursors. Favorite substrates for are midchain- and v-hydroxylated fatty acyl-CoAs (e.g. 12-hydroxyoctadecanoyl-CoA and 16-hydroxyhexadecanoyl-CoA). Required for pollen development and sporopollenin biosynthesis, the major constituent of exine in the outer pollen wall. In vitro, can use 4-coumaroyl-coenzyme A as substrate to produce bis-noryangonin and fatty acyl-coenzyme A as substrate to produce medium-chain alkyl pyrones. May play a role in both the synthesis of pollen fatty acids and phenolics found in exine. This Arabidopsis thaliana (Mouse-ear cress) protein is Type III polyketide synthase A.